The primary structure comprises 61 residues: MAKTSLKVKAARPQKFKVRAYNRCKLCGRPRAYMRKFGLCRHCFRKLAHEGQIPGIRKASW.

The Zn(2+) site is built by Cys-24, Cys-27, Cys-40, and Cys-43.

This sequence belongs to the universal ribosomal protein uS14 family. Zinc-binding uS14 subfamily. Part of the 30S ribosomal subunit. Contacts proteins S3 and S10. It depends on Zn(2+) as a cofactor.

Its function is as follows. Binds 16S rRNA, required for the assembly of 30S particles and may also be responsible for determining the conformation of the 16S rRNA at the A site. The sequence is that of Small ribosomal subunit protein uS14 from Symbiobacterium thermophilum (strain DSM 24528 / JCM 14929 / IAM 14863 / T).